A 601-amino-acid polypeptide reads, in one-letter code: Potassium-transporting ATPase potassium-binding subunit (601 aa).

12 helical membrane passes run 6 to 26, 65 to 85, 136 to 156, 179 to 199, 283 to 303, 313 to 333, 367 to 387, 397 to 417, 419 to 439, 458 to 478, 524 to 544, and 566 to 586; these read IMLL…LGLF, SYAI…YAVQ, ALTG…FALI, LYIL…QGVI, FSNF…CFTF, GWAV…IVMT, FGIS…CGAV, MGGF…GGVG, GLYG…LMIG, SIAI…AVLV, MLAI…LAIA, and LFVA…YVPA.

It belongs to the KdpA family. The system is composed of three essential subunits: KdpA, KdpB and KdpC.

The protein resides in the cell inner membrane. In terms of biological role, part of the high-affinity ATP-driven potassium transport (or Kdp) system, which catalyzes the hydrolysis of ATP coupled with the electrogenic transport of potassium into the cytoplasm. This subunit binds the periplasmic potassium ions and delivers the ions to the membrane domain of KdpB through an intramembrane tunnel. The polypeptide is Potassium-transporting ATPase potassium-binding subunit (Herminiimonas arsenicoxydans).